Consider the following 298-residue polypeptide: Protein DR_1172 (298 aa).

LEA-like repeat units lie at residues 48–117 (DAAQ…NVGQ), 128–197 (DQAK…DVAQ), and 201–270 (QGAQ…AGKQ). The span at 174-193 (VQDVKADASKAADQAKDKAQ) shows a compositional bias: basic and acidic residues. Residues 174 to 298 (VQDVKADASK…MTGNTNTRKN (125 aa)) form a disordered region. Over residues 194–208 (DVAQNVKQGAQQAAS) the composition is skewed to low complexity. Residues 209 to 233 (DAKDKVQDVKADASRAADQAKDKAQ) are compositionally biased toward basic and acidic residues. The span at 275 to 298 (GSTTNNAGTAGNTGMTGNTNTRKN) shows a compositional bias: low complexity.

It belongs to the LEA type 1 family.

In Deinococcus radiodurans (strain ATCC 13939 / DSM 20539 / JCM 16871 / CCUG 27074 / LMG 4051 / NBRC 15346 / NCIMB 9279 / VKM B-1422 / R1), this protein is Protein DR_1172.